The following is a 352-amino-acid chain: Anthranilate phosphoribosyltransferase (352 aa).

5-phospho-alpha-D-ribose 1-diphosphate is bound by residues G82, 85–86 (GD), S90, 92–95 (NIST), 110–118 (KHGNRAVTG), and G122. G82 is an anthranilate binding site. Residue S94 coordinates Mg(2+). N113 is a binding site for anthranilate. R168 contacts anthranilate. Mg(2+) is bound by residues D232 and E233.

This sequence belongs to the anthranilate phosphoribosyltransferase family. In terms of assembly, homodimer. Mg(2+) is required as a cofactor.

The catalysed reaction is N-(5-phospho-beta-D-ribosyl)anthranilate + diphosphate = 5-phospho-alpha-D-ribose 1-diphosphate + anthranilate. Its pathway is amino-acid biosynthesis; L-tryptophan biosynthesis; L-tryptophan from chorismate: step 2/5. Catalyzes the transfer of the phosphoribosyl group of 5-phosphorylribose-1-pyrophosphate (PRPP) to anthranilate to yield N-(5'-phosphoribosyl)-anthranilate (PRA). In Methanothermobacter thermautotrophicus (strain ATCC 29096 / DSM 1053 / JCM 10044 / NBRC 100330 / Delta H) (Methanobacterium thermoautotrophicum), this protein is Anthranilate phosphoribosyltransferase.